Here is a 462-residue protein sequence, read N- to C-terminus: Argininosuccinate lyase (462 aa).

This sequence belongs to the lyase 1 family. Argininosuccinate lyase subfamily.

The protein localises to the cytoplasm. It catalyses the reaction 2-(N(omega)-L-arginino)succinate = fumarate + L-arginine. The protein operates within amino-acid biosynthesis; L-arginine biosynthesis; L-arginine from L-ornithine and carbamoyl phosphate: step 3/3. This chain is Argininosuccinate lyase, found in Streptococcus agalactiae serotype Ia (strain ATCC 27591 / A909 / CDC SS700).